A 338-amino-acid polypeptide reads, in one-letter code: UDP-glucose 4-epimerase (338 aa).

NAD(+) contacts are provided by residues 16–17, 37–42, 59–60, 81–85, Thr-126, Tyr-153, Lys-157, and Phe-181; these read YI, IDINHT, NL, and FAAKT. The substrate site is built by Thr-126 and Tyr-153. Tyr-153 functions as the Proton acceptor in the catalytic mechanism. Residues Asn-182, 198–199, 215–217, Arg-230, and 294–297 each bind substrate; these read TL, FLY, and RAGD.

Belongs to the NAD(P)-dependent epimerase/dehydratase family. Homodimer. Requires NAD(+) as cofactor.

The enzyme catalyses UDP-alpha-D-glucose = UDP-alpha-D-galactose. The protein operates within carbohydrate metabolism; galactose metabolism. Involved in the metabolism of galactose. Catalyzes the conversion of UDP-galactose (UDP-Gal) to UDP-glucose (UDP-Glc) through a mechanism involving the transient reduction of NAD. In Mycoplasma pneumoniae (strain ATCC 29342 / M129 / Subtype 1) (Mycoplasmoides pneumoniae), this protein is UDP-glucose 4-epimerase (galE).